The following is a 403-amino-acid chain: MANTFMNSPRFYFTSESVSEGHPDKMCDQISDAILDAFLSHDPKARVAVETATTTGLIVVLGEVTYERGYIPIEEIVRRTVKEIGYTSAEYGFDADTCGVMVAIHGQSPDIAMGVDKALEAKIGAMADDVEAVGAGDQGMMFGFACDETPELMPASIALAHRLIRRLERVRKDGTLPYLRPDAKSQVTVEYSFGKPVRVDTVLISSQHAPDITQDQIRADLIEHVIKTEIPEAWLDSQTKIFINPTGRFVIGGPMGDSGLTGRKIIVDTYGGVARHGGGAFSGKDPSKVDRSAAYACRWVAKNIVAAGLARRVELQVSYAIGVARPLSLSVETFGTAAVPDEVILKAVNEVFDLRPGAIIRDLDLRRPIYRKTAAGGHFGRTDIDLPWERTNRVEELRRAAGL.

Position 22 (His-22) interacts with ATP. Mg(2+) is bound at residue Asp-24. Residue Glu-50 participates in K(+) binding. 2 residues coordinate L-methionine: Glu-63 and Gln-107. The tract at residues 107-117 (QSPDIAMGVDK) is flexible loop. Residues 182 to 184 (DAK), 248 to 249 (RF), Asp-257, 263 to 264 (RK), Ala-280, and Lys-284 each bind ATP. Residue Asp-257 participates in L-methionine binding. Lys-288 lines the L-methionine pocket.

It belongs to the AdoMet synthase family. Homotetramer; dimer of dimers. Requires Mg(2+) as cofactor. The cofactor is K(+).

The protein resides in the cytoplasm. It carries out the reaction L-methionine + ATP + H2O = S-adenosyl-L-methionine + phosphate + diphosphate. The protein operates within amino-acid biosynthesis; S-adenosyl-L-methionine biosynthesis; S-adenosyl-L-methionine from L-methionine: step 1/1. In terms of biological role, catalyzes the formation of S-adenosylmethionine (AdoMet) from methionine and ATP. The overall synthetic reaction is composed of two sequential steps, AdoMet formation and the subsequent tripolyphosphate hydrolysis which occurs prior to release of AdoMet from the enzyme. The sequence is that of S-adenosylmethionine synthase from Chloroflexus aurantiacus (strain ATCC 29366 / DSM 635 / J-10-fl).